Consider the following 278-residue polypeptide: Large ribosomal subunit protein uL2 (278 aa).

The disordered stretch occupies residues 201–278 (HGNINDGKAG…IMRSRHQRKK (78 aa)). The span at 210-221 (GRSRWRGKRPHV) shows a compositional bias: basic residues.

It belongs to the universal ribosomal protein uL2 family. As to quaternary structure, part of the 50S ribosomal subunit. Forms a bridge to the 30S subunit in the 70S ribosome.

Its function is as follows. One of the primary rRNA binding proteins. Required for association of the 30S and 50S subunits to form the 70S ribosome, for tRNA binding and peptide bond formation. It has been suggested to have peptidyltransferase activity; this is somewhat controversial. Makes several contacts with the 16S rRNA in the 70S ribosome. This is Large ribosomal subunit protein uL2 from Rhizobium meliloti (strain 1021) (Ensifer meliloti).